Reading from the N-terminus, the 199-residue chain is Dephospho-CoA kinase (199 aa).

The DPCK domain maps to 2–199 (KIAVTGGYSS…FVADRIEKKK (198 aa)). Residue 10–15 (SSGKSS) participates in ATP binding.

It belongs to the CoaE family.

It is found in the cytoplasm. It catalyses the reaction 3'-dephospho-CoA + ATP = ADP + CoA + H(+). It participates in cofactor biosynthesis; coenzyme A biosynthesis; CoA from (R)-pantothenate: step 5/5. Catalyzes the phosphorylation of the 3'-hydroxyl group of dephosphocoenzyme A to form coenzyme A. In Desulfotalea psychrophila (strain LSv54 / DSM 12343), this protein is Dephospho-CoA kinase.